We begin with the raw amino-acid sequence, 61 residues long: Metallothionein-1M (61 aa).

Positions 1 to 29 (MDPNCSCTTGVSCACTGSCTCKECKCTSC) are beta. The a divalent metal cation site is built by cysteine 5, cysteine 7, cysteine 13, cysteine 15, cysteine 19, cysteine 21, cysteine 24, cysteine 26, cysteine 29, cysteine 33, cysteine 34, cysteine 36, cysteine 37, cysteine 41, cysteine 44, cysteine 48, cysteine 50, cysteine 57, cysteine 59, and cysteine 60. Positions 30–61 (KKSCCSCCPVGCAKCAHGCVCKGTLENCSCCA) are alpha.

This sequence belongs to the metallothionein superfamily. Type 1 family. As to quaternary structure, monomer.

Metallothioneins have a high content of cysteine residues that bind various heavy metals; these proteins are transcriptionally regulated by both heavy metals and glucocorticoids. This is Metallothionein-1M (MT1M) from Homo sapiens (Human).